We begin with the raw amino-acid sequence, 237 residues long: Protein GrpE (237 aa).

Disordered stretches follow at residues 1–52 and 200–237; these read MSGD…RLQQ and KVSMGPGPQSGASPSSAQPNDDSTATFQGEADPAQPGV. The span at 27–40 shows a compositional bias: polar residues; that stretch reads ASINSDEGQSSAQS. Over residues 204–218 the composition is skewed to low complexity; sequence GPGPQSGASPSSAQP.

Belongs to the GrpE family. As to quaternary structure, homodimer.

The protein resides in the cytoplasm. Functionally, participates actively in the response to hyperosmotic and heat shock by preventing the aggregation of stress-denatured proteins, in association with DnaK and GrpE. It is the nucleotide exchange factor for DnaK and may function as a thermosensor. Unfolded proteins bind initially to DnaJ; upon interaction with the DnaJ-bound protein, DnaK hydrolyzes its bound ATP, resulting in the formation of a stable complex. GrpE releases ADP from DnaK; ATP binding to DnaK triggers the release of the substrate protein, thus completing the reaction cycle. Several rounds of ATP-dependent interactions between DnaJ, DnaK and GrpE are required for fully efficient folding. The chain is Protein GrpE from Prochlorococcus marinus (strain MIT 9313).